Reading from the N-terminus, the 396-residue chain is Flavohemoprotein (396 aa).

Residues 1–136 (MLDTQTIAIV…LADVFIQRES (136 aa)) form the Globin domain. Histidine 85 lines the heme b pocket. Residues tyrosine 95 and glutamate 135 each act as charge relay system in the active site. The reductase stretch occupies residues 147 to 396 (GGWRTLRRFR…YECFGPHKVI (250 aa)). Positions 150-255 (RTLRRFRIIK…APPRGDFFLD (106 aa)) constitute an FAD-binding FR-type domain. Residues tyrosine 188 and 204-207 (RQYS) each bind FAD. 268–273 (GVGQTP) contacts NADP(+). 389 to 392 (CFGP) contributes to the FAD binding site.

This sequence belongs to the globin family. Two-domain flavohemoproteins subfamily. It in the C-terminal section; belongs to the flavoprotein pyridine nucleotide cytochrome reductase family. The cofactor is heme b. Requires FAD as cofactor.

It carries out the reaction 2 nitric oxide + NADPH + 2 O2 = 2 nitrate + NADP(+) + H(+). The enzyme catalyses 2 nitric oxide + NADH + 2 O2 = 2 nitrate + NAD(+) + H(+). Its function is as follows. Is involved in NO detoxification in an aerobic process, termed nitric oxide dioxygenase (NOD) reaction that utilizes O(2) and NAD(P)H to convert NO to nitrate, which protects the bacterium from various noxious nitrogen compounds. Therefore, plays a central role in the inducible response to nitrosative stress. The protein is Flavohemoprotein of Yersinia pestis.